The sequence spans 315 residues: MKPIKIALIGAGNVGNSFLYAAMNQGLASEYGIIDINPDFADGNAFDFEDASASLPFPISVSRYEYKDLKDADFIVITAGRPQKPGETRLELVADNIRIIREIALKVKESGFSGISIIVANPVDIITRAYRDASGFSDQKVIGSGTVLDTARLQFAIAKRAKVSPNSVQAYVMGEHGDSSFVAYSNIKIAGEYFCAYSKLTGIDSSNYEKELEYPVSRRAYEIINRKRATFYGIGAAIAKIVSNIIKDTKNIMIAGANLRGEYGFHGVNIGVPVVLGANGIEKIIEISLNDKEKEKFAKSVAIIDKIYQDAIKNI.

Residues Val14, Asp35, and Tyr66 each coordinate NAD(+). Residues Gln83, Arg89, and 121 to 124 each bind substrate; that span reads NPVD. NAD(+) is bound by residues 119 to 121 and Ser144; that span reads VAN. Position 149–152 (149–152) interacts with substrate; it reads DTAR. His176 serves as the catalytic Proton acceptor. Phosphotyrosine is present on Tyr221. Thr230 contributes to the substrate binding site.

This sequence belongs to the LDH/MDH superfamily. LDH family. As to quaternary structure, homotetramer.

It is found in the cytoplasm. The enzyme catalyses (S)-lactate + NAD(+) = pyruvate + NADH + H(+). Its pathway is fermentation; pyruvate fermentation to lactate; (S)-lactate from pyruvate: step 1/1. In terms of biological role, catalyzes the conversion of lactate to pyruvate. The protein is L-lactate dehydrogenase of Mesomycoplasma hyopneumoniae (strain 232) (Mycoplasma hyopneumoniae).